The sequence spans 151 residues: Arginine repressor (151 aa).

It belongs to the ArgR family.

It localises to the cytoplasm. The protein operates within amino-acid biosynthesis; L-arginine biosynthesis [regulation]. In terms of biological role, regulates arginine biosynthesis genes. This Enterococcus faecalis (strain ATCC 700802 / V583) protein is Arginine repressor.